A 123-amino-acid chain; its full sequence is MADLQKIVDDLSSLTVLEAAELAKLLEEKWGVSAAAAVAVAGPAAAAAAPAEEKTEFTVVLASAGDKKIEVIKEVRAITGLGLKEAKDLVEGAPKPVKEGVNKDEAEKVKAQLEKAGAKVELK.

This sequence belongs to the bacterial ribosomal protein bL12 family. In terms of assembly, homodimer. Part of the ribosomal stalk of the 50S ribosomal subunit. Forms a multimeric L10(L12)X complex, where L10 forms an elongated spine to which 2 to 4 L12 dimers bind in a sequential fashion. Binds GTP-bound translation factors.

Its function is as follows. Forms part of the ribosomal stalk which helps the ribosome interact with GTP-bound translation factors. Is thus essential for accurate translation. The polypeptide is Large ribosomal subunit protein bL12 (Rhodopseudomonas palustris (strain BisA53)).